Reading from the N-terminus, the 490-residue chain is Bifunctional protein HldE (490 aa).

Residues 1-330 (MSRFDTLLQS…RKILPHASLA (330 aa)) are ribokinase. 205 to 208 (NRKE) is a binding site for ATP. D275 is an active-site residue. A cytidylyltransferase region spans residues 358–490 (FTNGCFDILH…LVEKAREGTT (133 aa)).

This sequence in the N-terminal section; belongs to the carbohydrate kinase PfkB family. In the C-terminal section; belongs to the cytidylyltransferase family. Homodimer.

The catalysed reaction is D-glycero-beta-D-manno-heptose 7-phosphate + ATP = D-glycero-beta-D-manno-heptose 1,7-bisphosphate + ADP + H(+). It carries out the reaction D-glycero-beta-D-manno-heptose 1-phosphate + ATP + H(+) = ADP-D-glycero-beta-D-manno-heptose + diphosphate. It participates in nucleotide-sugar biosynthesis; ADP-L-glycero-beta-D-manno-heptose biosynthesis; ADP-L-glycero-beta-D-manno-heptose from D-glycero-beta-D-manno-heptose 7-phosphate: step 1/4. The protein operates within nucleotide-sugar biosynthesis; ADP-L-glycero-beta-D-manno-heptose biosynthesis; ADP-L-glycero-beta-D-manno-heptose from D-glycero-beta-D-manno-heptose 7-phosphate: step 3/4. In terms of biological role, catalyzes the phosphorylation of D-glycero-D-manno-heptose 7-phosphate at the C-1 position to selectively form D-glycero-beta-D-manno-heptose-1,7-bisphosphate. Catalyzes the ADP transfer from ATP to D-glycero-beta-D-manno-heptose 1-phosphate, yielding ADP-D-glycero-beta-D-manno-heptose. In Rhodopseudomonas palustris (strain BisB5), this protein is Bifunctional protein HldE.